Here is a 338-residue protein sequence, read N- to C-terminus: MKLSTVLLSAGLASTTLAQFSNSTSASSTDVTSSSSISTSSGSVTITSSEAPESDNGTSTAAPTETSTEAPTTAIPTNGTSTEAPTTAIPTNGTSTEAPTDTTTEAPTTALPTNGTSTEAPTDTTTEAPTTGLPTNGTTSAFPPTTSLPPSNTTTTPPYNPSTDYTTDYTVVTEYTTYCPEPTTFTTNGKTYTVTEPTTLTITDCPCTIEKPTTTSTTEYTVVTEYTTYCPEPTTFTTNGKTYTVTEPTTLTITDCPCTIEKSEAPESSVPVTESKGTTTKETGVTTKQTTANPSLTVSTVVPVSSSASSHSVVINSNGANVVVPGALGLAGVAMLFL.

Residues Met-1–Ala-18 form the signal peptide. Over residues Phe-20–Ser-49 the composition is skewed to low complexity. Positions Phe-20–Tyr-165 are disordered. 2 N-linked (GlcNAc...) asparagine glycosylation sites follow: Asn-22 and Asn-56. 7 tandem repeats follow at residues Thr-58–Glu-65, Thr-66–Gly-79, Thr-80–Gly-93, Thr-94–Asp-101, Thr-102–Gly-115, Thr-116–Asp-123, and Thr-124–Gly-137. Over residues Thr-58–Ala-74 the composition is skewed to low complexity. A 7 X approximate tandem repeats region spans residues Thr-58 to Gly-137. The segment covering Ile-75–Gly-93 has biased composition (polar residues). Residues Asn-78 and Asn-92 are each glycosylated (N-linked (GlcNAc...) asparagine). Residues Thr-94–Thr-135 show a composition bias toward low complexity. N-linked (GlcNAc...) asparagine glycosylation occurs at Asn-114. Asn-136 and Asn-152 each carry an N-linked (GlcNAc...) asparagine glycan. A compositionally biased stretch (low complexity) spans Pro-143–Tyr-165. 2 repeat units span residues Tyr-169–Lys-211 and Tyr-220–Lys-262. Residues Tyr-169–Lys-262 are 2 X 43 AA repeats. Residues Glu-264–Gln-289 are disordered. Low complexity predominate over residues Val-272–Gln-289. Asn-318 carries GPI-anchor amidated asparagine lipidation. Residues Gly-319–Leu-338 constitute a propeptide, removed in mature form.

This sequence belongs to the SED1 family. Post-translationally, the N-terminus is blocked. The GPI-anchor is attached to the protein in the endoplasmic reticulum and serves to target the protein to the cell surface. There, the glucosamine-inositol phospholipid moiety is cleaved off and the GPI-modified mannoprotein is covalently attached via its lipidless GPI glycan remnant to the 1,6-beta-glucan of the outer cell wall layer.

The protein localises to the secreted. The protein resides in the cell wall. It is found in the membrane. Its function is as follows. Component of the cell wall. Major cell wall protein in stationary phase cells. Required to stabilize the cell wall in the absence of multiple GPI-anchored mannoproteins. This chain is Cell wall protein SED1 (SED1), found in Saccharomyces cerevisiae (strain ATCC 204508 / S288c) (Baker's yeast).